A 185-amino-acid chain; its full sequence is Ribosome-recycling factor (185 aa).

This sequence belongs to the RRF family.

Its subcellular location is the cytoplasm. Its function is as follows. Responsible for the release of ribosomes from messenger RNA at the termination of protein biosynthesis. May increase the efficiency of translation by recycling ribosomes from one round of translation to another. This Streptococcus pyogenes serotype M1 protein is Ribosome-recycling factor.